The primary structure comprises 253 residues: Glucosamine-6-phosphate deaminase (253 aa).

The active-site Proton acceptor; for enolization step is the Asp67. Asn136 serves as the catalytic For ring-opening step. The active-site Proton acceptor; for ring-opening step is the His138. Glu143 functions as the For ring-opening step in the catalytic mechanism.

The protein belongs to the glucosamine/galactosamine-6-phosphate isomerase family. NagB subfamily.

The enzyme catalyses alpha-D-glucosamine 6-phosphate + H2O = beta-D-fructose 6-phosphate + NH4(+). It participates in amino-sugar metabolism; N-acetylneuraminate degradation; D-fructose 6-phosphate from N-acetylneuraminate: step 5/5. In terms of biological role, catalyzes the reversible isomerization-deamination of glucosamine 6-phosphate (GlcN6P) to form fructose 6-phosphate (Fru6P) and ammonium ion. The sequence is that of Glucosamine-6-phosphate deaminase from Thermoanaerobacter sp. (strain X514).